A 491-amino-acid polypeptide reads, in one-letter code: Nucleotidyltransferase MB21D2 (491 aa).

A compositionally biased stretch (polar residues) spans 431–442; sequence RGSTTSIPSPQS. Residues 431-452 are disordered; sequence RGSTTSIPSPQSDGGDPNQPDD. T435 is modified (phosphothreonine). Phosphoserine occurs at positions 436, 439, and 442.

It belongs to the mab-21 family.

Its function is as follows. Probable nucleotidyltransferase that catalyzes the formation of cyclic dinucleotide second messenger in response to some unknown stimulus. This chain is Nucleotidyltransferase MB21D2, found in Homo sapiens (Human).